The primary structure comprises 25 residues: GLLGVLGSVAKHVLPHVVPVIAEHL.

Position 25 is a leucine amide (L25).

In terms of tissue distribution, expressed by the skin parotoid and/or rostral glands.

It is found in the secreted. Antibacterial peptide, that adopts an alpha helical conformation which can disrupt bacterial membranes. Each caerin displays a different antimicrobial specificity. The chain is Caerin-1.2 from Ranoidea caerulea (Green tree frog).